A 456-amino-acid polypeptide reads, in one-letter code: Glycosyl hydrolase family 109 protein 2 (456 aa).

Residues 1-33 constitute a signal peptide (tat-type signal); it reads MSGFDRRSFLKASMVTAAATALAACASSERATG. Residues 63 to 64, Asp-85, 134 to 137, 154 to 155, and Asn-183 each bind NAD(+); these read ER, WAWH, and EV. Substrate contacts are provided by residues Tyr-212, Arg-231, 243–246, and Tyr-325; that span reads YPTH. An NAD(+)-binding site is contributed by Tyr-243.

This sequence belongs to the Gfo/Idh/MocA family. Glycosyl hydrolase 109 subfamily. Requires NAD(+) as cofactor. Predicted to be exported by the Tat system. The position of the signal peptide cleavage has not been experimentally proven.

Glycosidase. The protein is Glycosyl hydrolase family 109 protein 2 of Shewanella sp. (strain MR-4).